An 80-amino-acid chain; its full sequence is Cell division activator CedA (80 aa).

Belongs to the CedA family.

In terms of biological role, activates the cell division inhibited by chromosomal DNA over-replication. This is Cell division activator CedA from Salmonella arizonae (strain ATCC BAA-731 / CDC346-86 / RSK2980).